Consider the following 298-residue polypeptide: Single myb histone 2 (298 aa).

The region spanning 1 to 61 is the HTH myb-type domain; the sequence is MGVPKQRWTP…KWRNLSVTAG (61 aa). Positions 28-57 form a DNA-binding region, H-T-H motif; the sequence is WRTILRDSDFSALLRLRSNVDLKDKWRNLS. An H15 domain is found at 124-192; it reads SVARLDDLIV…KVNQKYRIAP (69 aa). The stretch at 237–278 forms a coiled coil; that stretch reads EEAAAFAAKAVAEAEVAMAEAEEAARVAEAAENDAEAAKAFL.

This sequence belongs to the histone H1/H5 family. SMH subfamily. Forms a homodimer and heterodimers.

The protein resides in the nucleus. The protein localises to the chromosome. It localises to the nucleolus. It is found in the telomere. In terms of biological role, binds preferentially double-stranded telomeric repeats, but may also bind to the single telomeric strand. The sequence is that of Single myb histone 2 (SMH2) from Zea mays (Maize).